We begin with the raw amino-acid sequence, 309 residues long: Elongation factor Ts (309 aa).

The interval 82–85 (TDFV) is involved in Mg(2+) ion dislocation from EF-Tu.

The protein belongs to the EF-Ts family.

It is found in the cytoplasm. Functionally, associates with the EF-Tu.GDP complex and induces the exchange of GDP to GTP. It remains bound to the aminoacyl-tRNA.EF-Tu.GTP complex up to the GTP hydrolysis stage on the ribosome. The protein is Elongation factor Ts (tsf) of Rickettsia prowazekii (strain Madrid E).